The sequence spans 30 residues: Acidic phospholipase A2 homolog cannitoxin gamma chain (30 aa).

As to quaternary structure, heterotrimer of alpha, beta, and gamma chains; non-covalently linked. Glycosylated. As to expression, expressed by the venom gland.

Its subcellular location is the secreted. Heterotrimer: Snake venom phospholipase A2 (PLA2) heterotrimer that acts as a potent presynaptic neurotoxin by blocking synaptic transmission and synaptic vesicle recycling. Enzymatic activity is essential for the neurotoxic effects. May act by binding in a calcium-dependent fashion to neurotonal pentraxin-1 (NPTX1) and neurotonal pentraxin-2 (NPTX2), but not to neuronal pentraxin receptor (NPTXR). Also binds to taipoxin-associated calcium binding protein 49 (RCN2), a protein localized in the lumen of endoplasmic reticulum. In terms of biological role, monomer (gamma chain): Snake venom phospholipase A2 homolog that is neither toxic nor enzymatically active. Does not bind calcium. This is Acidic phospholipase A2 homolog cannitoxin gamma chain from Oxyuranus scutellatus canni (Papuan taipan).